The primary structure comprises 292 residues: Putative xanthine dehydrogenase FAD-binding subunit XdhB (292 aa).

The FAD-binding PCMH-type domain maps to 1 to 176; that stretch reads MFDFASYHRA…VAFHFPPQPK (176 aa). FAD contacts are provided by residues 27 to 34, 109 to 113, isoleucine 165, and phenylalanine 184; these read KLLAGGTD and ATYGG.

In terms of assembly, heterotrimer of XdhA, XdhB and XdhC. FAD is required as a cofactor.

It carries out the reaction xanthine + NAD(+) + H2O = urate + NADH + H(+). It catalyses the reaction hypoxanthine + NAD(+) + H2O = xanthine + NADH + H(+). The protein operates within purine metabolism; hypoxanthine degradation; urate from hypoxanthine: step 1/2. Its pathway is purine metabolism; hypoxanthine degradation; urate from hypoxanthine: step 2/2. In terms of biological role, presumed to be a dehydrogenase, but possibly an oxidase. Participates in limited purine salvage (requires aspartate) but does not support aerobic growth on purines as the sole carbon source (purine catabolism). This chain is Putative xanthine dehydrogenase FAD-binding subunit XdhB (xdhB), found in Escherichia coli (strain K12).